A 92-amino-acid polypeptide reads, in one-letter code: Probable glutathione transferase (92 aa).

Residues Arg1–Pro71 form the GST N-terminal domain. Catalysis depends on Cys3, which acts as the Nucleophile. Glutathione-binding positions include Lys30, Val43, and Glu55–Ser56.

The protein belongs to the GST superfamily. Omega family.

It catalyses the reaction RX + glutathione = an S-substituted glutathione + a halide anion + H(+). The enzyme catalyses L-dehydroascorbate + 2 glutathione = glutathione disulfide + L-ascorbate. The catalysed reaction is methylarsonate + 2 glutathione + H(+) = methylarsonous acid + glutathione disulfide + H2O. Its function is as follows. Exhibits glutathione-dependent thiol transferase activity. Has dehydroascorbate reductase activity and may contribute to the recycling of ascorbic acid. Participates in the biotransformation of inorganic arsenic and reduces monomethylarsonic acid (MMA). This is Probable glutathione transferase from Aplysia californica (California sea hare).